The sequence spans 682 residues: Heat shock 70 kDa protein 10, mitochondrial (682 aa).

The N-terminal 50 residues, 1–50 (MATAALLRSIRRREVVSSPFSAYRCLSSSGKASLNSSYLGQNFRSFSRAF), are a transit peptide targeting the mitochondrion. Residues 646-682 (KIGEHMSGGSGGGSAPGGGSEGGSDQAPEAEYEEVKK) are disordered. Gly residues predominate over residues 651–667 (MSGGSGGGSAPGGGSEG). The span at 673–682 (PEAEYEEVKK) shows a compositional bias: acidic residues.

The protein belongs to the heat shock protein 70 (TC 1.A.33) family. DnaK subfamily.

It is found in the mitochondrion. Functionally, chaperone involved in the maturation of iron-sulfur [Fe-S] cluster-containing proteins. Has a low intrinsic ATPase activity which is markedly stimulated by HSCB and ISU1. In cooperation with other chaperones, Hsp70s are key components that facilitate folding of de novo synthesized proteins, assist translocation of precursor proteins into organelles, and are responsible for degradation of damaged protein under stress conditions. The chain is Heat shock 70 kDa protein 10, mitochondrial from Arabidopsis thaliana (Mouse-ear cress).